Here is a 553-residue protein sequence, read N- to C-terminus: Arginine--tRNA ligase (553 aa).

The 'HIGH' region signature appears at 130 to 140 (ANPTGDLHIGH).

It belongs to the class-I aminoacyl-tRNA synthetase family. In terms of assembly, monomer.

The protein localises to the cytoplasm. The catalysed reaction is tRNA(Arg) + L-arginine + ATP = L-arginyl-tRNA(Arg) + AMP + diphosphate. In Staphylococcus aureus (strain MSSA476), this protein is Arginine--tRNA ligase.